Here is a 275-residue protein sequence, read N- to C-terminus: 2,3,4,5-tetrahydropyridine-2,6-dicarboxylate N-succinyltransferase (275 aa).

Residues arginine 104 and aspartate 141 each contribute to the substrate site.

The protein belongs to the transferase hexapeptide repeat family. Homotrimer.

It localises to the cytoplasm. It carries out the reaction (S)-2,3,4,5-tetrahydrodipicolinate + succinyl-CoA + H2O = (S)-2-succinylamino-6-oxoheptanedioate + CoA. Its pathway is amino-acid biosynthesis; L-lysine biosynthesis via DAP pathway; LL-2,6-diaminopimelate from (S)-tetrahydrodipicolinate (succinylase route): step 1/3. This is 2,3,4,5-tetrahydropyridine-2,6-dicarboxylate N-succinyltransferase from Haemophilus influenzae (strain 86-028NP).